The primary structure comprises 225 residues: MIGIAIKPSKINEDIVDFGHFIGRYFDYYIIDAENEVIKDEEILERLEKISKVVMTVQAKRVDAFELLELYASYGFDLCVVLGNKQYLTEKERKFKNYRILDVIKEAMRCSRDIWVGIEGVESLVKDIVEEHNLIAYYLYGQECSINSKRAIYVPYATKINENALESMKGYLNRRKNYRGNWRDFILSLNDEESIERIKNNDIVVGYPIIPNKEEILNFVRCFSV.

This is an uncharacterized protein from Methanocaldococcus jannaschii (strain ATCC 43067 / DSM 2661 / JAL-1 / JCM 10045 / NBRC 100440) (Methanococcus jannaschii).